A 175-amino-acid polypeptide reads, in one-letter code: Pituitary adenylate cyclase-activating polypeptide (175 aa).

Positions 1 to 24 (MTMCSGARLALLVYGIIMHNSVSC) are cleaved as a signal peptide. Positions 25-78 (SPAAGLSFPGIRPEEEAYDQDGNPLQDFYDWDPPGAGSPASALRDAYALYYPAD) are excised as a propeptide. The interval 149–157 (VKKYLAAVL) is important for receptor binding. A Leucine amide modification is found at Leu-157. Position 168 is a lysine amide (Lys-168). Residues 172–175 (IAYL) constitute a propeptide that is removed on maturation.

The protein belongs to the glucagon family.

It localises to the secreted. Its function is as follows. PACAP is a neuropeptide involved in diverse array of physiological processes through activating the PACAP subfamily of class B1 G protein-coupled receptors: VIP receptor 1 (VIPR1), VIP receptor 2 (VIPR2), and PACAP type I receptor (ADCYAP1R1). Exerts neuroprotective and general cytoprotective effects due to anti-apoptotic, anti-inflammatory, and antioxidant actions. Promotes neuron projection development through the RAPGEF2/Rap1/B-Raf/ERK pathway. In chromaffin cells, induces long-lasting increase of intracellular calcium concentrations and neuroendocrine secretion. Involved in the control of glucose homeostasis, induces insulin secretion by pancreatic beta cells. PACAP exists in two bioactive forms from proteolysis of the same precursor protein, PACAP27 and PACAP38, which differ by eleven amino acid residues in the C-terminus. This is Pituitary adenylate cyclase-activating polypeptide (Adcyap1) from Rattus norvegicus (Rat).